The sequence spans 476 residues: ATP sulfurylase 2 (476 aa).

A chloroplast-targeting transit peptide spans 1–56 (MSLMIRSSYVSHITLFQPRNSKPSSFTNQISFLSSSNNNPFLNLVYKRNLTMQSVS).

Belongs to the sulfate adenylyltransferase family. In terms of assembly, homotetramer. Mostly expressed in leaves or cotyledons.

It localises to the plastid. It is found in the chloroplast. The protein resides in the cytoplasm. The catalysed reaction is sulfate + ATP + H(+) = adenosine 5'-phosphosulfate + diphosphate. The protein operates within sulfur metabolism; hydrogen sulfide biosynthesis; sulfite from sulfate: step 1/3. The polypeptide is ATP sulfurylase 2 (APS2) (Arabidopsis thaliana (Mouse-ear cress)).